Consider the following 561-residue polypeptide: Probable oligo-1,6-glucosidase 2 (561 aa).

The active-site Nucleophile is the Asp-199. The Proton donor role is filled by Glu-255.

This sequence belongs to the glycosyl hydrolase 13 family.

Its subcellular location is the cytoplasm. It catalyses the reaction Hydrolysis of (1-&gt;6)-alpha-D-glucosidic linkages in some oligosaccharides produced from starch and glycogen by alpha-amylase, and in isomaltose.. This is Probable oligo-1,6-glucosidase 2 (ycdG) from Bacillus subtilis (strain 168).